Consider the following 370-residue polypeptide: Quinolinate synthase (370 aa).

Histidine 62 and serine 83 together coordinate iminosuccinate. Cysteine 128 serves as a coordination point for [4Fe-4S] cluster. Iminosuccinate is bound by residues 154-156 (YAN) and serine 171. Cysteine 215 is a [4Fe-4S] cluster binding site. Iminosuccinate contacts are provided by residues 241–243 (HPE) and threonine 258. Cysteine 312 contributes to the [4Fe-4S] cluster binding site.

This sequence belongs to the quinolinate synthase family. Type 1 subfamily. Requires [4Fe-4S] cluster as cofactor.

Its subcellular location is the cytoplasm. It carries out the reaction iminosuccinate + dihydroxyacetone phosphate = quinolinate + phosphate + 2 H2O + H(+). It functions in the pathway cofactor biosynthesis; NAD(+) biosynthesis; quinolinate from iminoaspartate: step 1/1. Catalyzes the condensation of iminoaspartate with dihydroxyacetone phosphate to form quinolinate. The protein is Quinolinate synthase of Neisseria meningitidis serogroup B (strain ATCC BAA-335 / MC58).